The primary structure comprises 216 residues: Peptide methionine sulfoxide reductase MsrA (216 aa).

Residue C54 is part of the active site.

The protein belongs to the MsrA Met sulfoxide reductase family.

It catalyses the reaction L-methionyl-[protein] + [thioredoxin]-disulfide + H2O = L-methionyl-(S)-S-oxide-[protein] + [thioredoxin]-dithiol. It carries out the reaction [thioredoxin]-disulfide + L-methionine + H2O = L-methionine (S)-S-oxide + [thioredoxin]-dithiol. Has an important function as a repair enzyme for proteins that have been inactivated by oxidation. Catalyzes the reversible oxidation-reduction of methionine sulfoxide in proteins to methionine. In Xanthomonas euvesicatoria pv. vesicatoria (strain 85-10) (Xanthomonas campestris pv. vesicatoria), this protein is Peptide methionine sulfoxide reductase MsrA.